Here is a 343-residue protein sequence, read N- to C-terminus: Selenide, water dikinase (343 aa).

Residue C15 is part of the active site. ATP contacts are provided by residues K18 and 46–48 (HKD). Residue D49 coordinates Mg(2+). Residues D66, D89, and 137–139 (GHS) contribute to the ATP site. D89 serves as a coordination point for Mg(2+). Residue D225 participates in Mg(2+) binding.

It belongs to the selenophosphate synthase 1 family. Class I subfamily. In terms of assembly, homodimer. Mg(2+) serves as cofactor.

The enzyme catalyses hydrogenselenide + ATP + H2O = selenophosphate + AMP + phosphate + 2 H(+). Synthesizes selenophosphate from selenide and ATP. This is Selenide, water dikinase from Sulfurimonas denitrificans (strain ATCC 33889 / DSM 1251) (Thiomicrospira denitrificans (strain ATCC 33889 / DSM 1251)).